We begin with the raw amino-acid sequence, 134 residues long: Large-conductance mechanosensitive channel (134 aa).

Transmembrane regions (helical) follow at residues 16 to 36 and 81 to 101; these read VIDLAVAVVIGAAFGKIVTAL and GDFLNTILQFIIIAFAIFIIV.

It belongs to the MscL family. In terms of assembly, homopentamer.

It localises to the cell inner membrane. Its function is as follows. Channel that opens in response to stretch forces in the membrane lipid bilayer. May participate in the regulation of osmotic pressure changes within the cell. This is Large-conductance mechanosensitive channel from Xylella fastidiosa (strain M12).